The following is a 115-amino-acid chain: U3-lycotoxin-Ls1a (115 aa).

The N-terminal stretch at 1-20 (MKFVLLFGVLLVTLFSYSSA) is a signal peptide. A propeptide spanning residues 21-44 (EMLDDFDQADEDELLSLIEKEEAR) is cleaved from the precursor. Cystine bridges form between Cys48/Cys63, Cys55/Cys72, Cys62/Cys87, and Cys74/Cys85.

Belongs to the neurotoxin 19 (CSTX) family. 01 subfamily. As to expression, expressed by the venom gland.

The protein localises to the secreted. This is U3-lycotoxin-Ls1a from Lycosa singoriensis (Wolf spider).